Consider the following 393-residue polypeptide: Envelope glycoprotein D (393 aa).

A signal peptide spans 1–25 (MGGAAARLGAVILFVVIVGLHGVRG). The interval 25 to 57 (GKYALADASLKMADPNRFRGKDLPVLDQLTDPP) is interaction with TNFRSF14. Residues 26 to 338 (KYALADASLK…PYHPPATPNN (313 aa)) lie on the Virion surface side of the membrane. His64 serves as a coordination point for Zn(2+). 3 disulfide bridges follow: Cys90–Cys213, Cys130–Cys226, and Cys142–Cys151. Asn118 and Asn145 each carry an N-linked (GlcNAc...) asparagine; by host glycan. Asp239 serves as a coordination point for Zn(2+). The tract at residues 260–304 (LKIAGWHGPRAPYTSTLLPPELPETPNATQPELAPEDPEDSALLE) is profusion. The interval 273 to 300 (TSTLLPPELPETPNATQPELAPEDPEDS) is disordered. Asn286 carries N-linked (GlcNAc...) asparagine; by host glycosylation. The helical transmembrane segment at 339–363 (MGLIAGAVGGSLLAALVICGIVYWM) threads the bilayer. Over 364–393 (RRRTRKAPKRIRLPHIREDDQPSSHQPLFY) the chain is Intravirion.

It belongs to the herpesviridae glycoprotein D family. As to quaternary structure, homodimer. Interacts with host receptor TNFRSF14. Interacts with host receptor NECTIN1. Interacts (via profusion domain) with gB; this interaction occurs in the absence of gH/gL. Interacts (via profusion domain) with gH/gL heterodimer; this interaction occurs in the absence of gB. Associates with the gB-gH/gL-gD complex. Interacts (via C-terminus) with UL11 tegument protein. Interacts with host RSAD2.

The protein localises to the virion membrane. It is found in the host Golgi apparatus. Functionally, envelope glycoprotein that binds to the host cell entry receptors NECTIN1, TNFRSF14/HVEM and 3-O-sulfated heparan sulfate, promoting the virus entry into host cells. May trigger fusion with host membrane, by recruiting the fusion machinery composed of gB and gH/gL. The sequence is that of Envelope glycoprotein D (gD) from Homo sapiens (Human).